Reading from the N-terminus, the 151-residue chain is UPF0178 protein GSU0171 (151 aa).

The protein belongs to the UPF0178 family.

This chain is UPF0178 protein GSU0171, found in Geobacter sulfurreducens (strain ATCC 51573 / DSM 12127 / PCA).